The following is a 139-amino-acid chain: Holo-[acyl-carrier-protein] synthase (139 aa).

Positions 8 and 61 each coordinate Mg(2+).

This sequence belongs to the P-Pant transferase superfamily. AcpS family. Mg(2+) is required as a cofactor.

The protein resides in the cytoplasm. It carries out the reaction apo-[ACP] + CoA = holo-[ACP] + adenosine 3',5'-bisphosphate + H(+). Its function is as follows. Transfers the 4'-phosphopantetheine moiety from coenzyme A to a Ser of acyl-carrier-protein. In Rhodopseudomonas palustris (strain BisA53), this protein is Holo-[acyl-carrier-protein] synthase.